The sequence spans 326 residues: dTDP-4-dehydro-6-deoxy-D-allose reductase (326 aa).

Residues 15–21 and 129–132 each bind NAD(+); these read GALGFIG and MSSS. Residue tyrosine 160 is the Proton donor/acceptor of the active site. NAD(+) contacts are provided by residues lysine 164 and 187–190; that span reads PGNV.

Belongs to the NAD(P)-dependent epimerase/dehydratase family.

It carries out the reaction dTDP-6-deoxy-alpha-D-allose + NAD(+) = dTDP-4-dehydro-6-deoxy-alpha-D-allose + NADH + H(+). It catalyses the reaction dTDP-6-deoxy-alpha-D-allose + NADP(+) = dTDP-4-dehydro-6-deoxy-alpha-D-allose + NADPH + H(+). Its function is as follows. Catalyzes the stereospecific reduction of the C-4 keto group of dTDP-4-dehydro-6-deoxy-D-allose, leading to dTDP-6-deoxy-D-allose, an intermediate in the biosynthesis of the mycinose moiety of dihydrochalcomycin (GERI-155) antibiotic. Cannot directly reduce dTDP-4-dehydro-6-deoxyglucose, and thus acts after the epimerization step catalyzed by GerF. The polypeptide is dTDP-4-dehydro-6-deoxy-D-allose reductase (gerKI) (Streptomyces sp).